Reading from the N-terminus, the 434-residue chain is Gamma-enolase (434 aa).

N-acetylserine is present on Ser2. Lys5 is subject to N6-acetyllysine. At Thr26 the chain carries Phosphothreonine. Ser40 lines the Mg(2+) pocket. At Tyr44 the chain carries Phosphotyrosine. Lys60 carries the post-translational modification N6-acetyllysine; alternate. Position 60 is an N6-succinyllysine; alternate (Lys60). Lys64 bears the N6-acetyllysine mark. At Lys89 the chain carries N6-acetyllysine; alternate. Position 89 is an N6-succinyllysine; alternate (Lys89). His158 and Glu167 together coordinate substrate. Residues Lys193, Lys197, and Lys199 each carry the N6-acetyllysine modification. At Lys202 the chain carries N6-acetyllysine; alternate. Residue Lys202 forms a Glycyl lysine isopeptide (Lys-Gly) (interchain with G-Cter in SUMO2); alternate linkage. The Proton donor role is filled by Glu210. An N6-acetyllysine; alternate mark is found at Lys228 and Lys233. Lys228 carries the N6-succinyllysine; alternate modification. An N6-(2-hydroxyisobutyryl)lysine; alternate modification is found at Lys233. Asp245 provides a ligand contact to Mg(2+). An N6-acetyllysine modification is found at Lys256. Ser263 is modified (phosphoserine). The residue at position 287 (Tyr287) is a Phosphotyrosine. Ser291 is subject to Phosphoserine. Glu293 and Asp318 together coordinate Mg(2+). The substrate site is built by Glu293 and Asp318. N6-acetyllysine is present on residues Lys335 and Lys343. Lys343 serves as the catalytic Proton acceptor. Substrate contacts are provided by residues 370-373 (SHRS) and Lys394. An N6-acetyllysine modification is found at Lys406.

It belongs to the enolase family. In terms of assembly, mammalian enolase is composed of 3 isozyme subunits, alpha, beta and gamma, which can form homodimers or heterodimers which are cell-type and development-specific. Mg(2+) is required as a cofactor. The alpha/alpha homodimer is expressed in embryo and in most adult tissues. The alpha/beta heterodimer and the beta/beta homodimer are found in striated muscle, and the alpha/gamma heterodimer and the gamma/gamma homodimer in neurons.

Its subcellular location is the cytoplasm. It localises to the cell membrane. The catalysed reaction is (2R)-2-phosphoglycerate = phosphoenolpyruvate + H2O. It functions in the pathway carbohydrate degradation; glycolysis; pyruvate from D-glyceraldehyde 3-phosphate: step 4/5. In terms of biological role, has neurotrophic and neuroprotective properties on a broad spectrum of central nervous system (CNS) neurons. Binds, in a calcium-dependent manner, to cultured neocortical neurons and promotes cell survival. The polypeptide is Gamma-enolase (ENO2) (Homo sapiens (Human)).